The chain runs to 800 residues: Phenylalanine--tRNA ligase beta subunit (800 aa).

Residues 39–154 (TKDIKNLVVG…ESQVPGTDAL (116 aa)) enclose the tRNA-binding domain. The B5 domain occupies 408-483 (AFITPIDITA…RIYGYDDIPS (76 aa)). Mg(2+) contacts are provided by aspartate 461, aspartate 467, glutamate 470, and glutamate 471. The region spanning 708 to 800 (PRFPGMSRDI…ALIEQGAVIR (93 aa)) is the FDX-ACB domain.

This sequence belongs to the phenylalanyl-tRNA synthetase beta subunit family. Type 1 subfamily. In terms of assembly, tetramer of two alpha and two beta subunits. It depends on Mg(2+) as a cofactor.

The protein localises to the cytoplasm. The enzyme catalyses tRNA(Phe) + L-phenylalanine + ATP = L-phenylalanyl-tRNA(Phe) + AMP + diphosphate + H(+). The polypeptide is Phenylalanine--tRNA ligase beta subunit (Staphylococcus aureus (strain MSSA476)).